A 921-amino-acid chain; its full sequence is TRPM8 channel-associated factor 1 (921 aa).

The region spanning 542–841 is the Peptidase M60 domain; the sequence is YCWMSTGLYI…TYLQLQEAFG (300 aa).

The protein belongs to the TCAF family. Interacts with TRPM8 (via N-terminus and C-terminus domains); the interaction inhibits TRPM8 channel activity. Interacts with TRPV6. Isoform 2 is expressed in the prostate and strongly expressed in cancerous prostate samples.

Its subcellular location is the cell membrane. Positively regulates the plasma membrane cation channel TRPM8 activity. Involved in the recruitment of TRPM8 to the cell surface. Promotes prostate cancer cell migration inhibition in a TRPM8-dependent manner. In Homo sapiens (Human), this protein is TRPM8 channel-associated factor 1.